Reading from the N-terminus, the 62-residue chain is Cobrotoxin II (62 aa).

Residues Leu-1–Gly-16 are compositionally biased toward polar residues. Residues Leu-1–Asn-23 form a disordered region. 4 disulfides stabilise this stretch: Cys-3-Cys-24, Cys-17-Cys-41, Cys-43-Cys-54, and Cys-55-Cys-60.

The protein belongs to the three-finger toxin family. Short-chain subfamily. Type I alpha-neurotoxin sub-subfamily. As to expression, expressed by the venom gland.

The protein resides in the secreted. Binds to muscle nicotinic acetylcholine receptor (nAChR) and inhibit acetylcholine from binding to the receptor, thereby impairing neuromuscular transmission. This Naja kaouthia (Monocled cobra) protein is Cobrotoxin II.